The chain runs to 68 residues: Large ribosomal subunit protein bL35 (68 aa).

It belongs to the bacterial ribosomal protein bL35 family.

In Rickettsia typhi (strain ATCC VR-144 / Wilmington), this protein is Large ribosomal subunit protein bL35.